A 61-amino-acid chain; its full sequence is MAKLSKMAQATRKLKFPVRQYNRCPLCGRPRAFLRKFQMCRICFRKRALQGEITGVIKSSW.

The Zn(2+) site is built by C24, C27, C40, and C43.

Belongs to the universal ribosomal protein uS14 family. Zinc-binding uS14 subfamily. As to quaternary structure, part of the 30S ribosomal subunit. Contacts proteins S3 and S10. It depends on Zn(2+) as a cofactor.

In terms of biological role, binds 16S rRNA, required for the assembly of 30S particles and may also be responsible for determining the conformation of the 16S rRNA at the A site. In Anaeromyxobacter dehalogenans (strain 2CP-1 / ATCC BAA-258), this protein is Small ribosomal subunit protein uS14.